A 101-amino-acid chain; its full sequence is Protein Tat (101 aa).

Residues 1–24 (MEPVDPNLEPWNHPGSQPKTACNN) form an interaction with human CREBBP region. Positions 1-48 (MEPVDPNLEPWNHPGSQPKTACNNCYCKRCSYHCLVCFQTKGLGISYG) are transactivation. 3 residues coordinate Zn(2+): Cys-22, Cys-25, and Cys-27. Residues 22–37 (CNNCYCKRCSYHCLVC) are cysteine-rich. Lys-28 carries the N6-acetyllysine; by host PCAF modification. Cys-30, His-33, Cys-34, and Cys-37 together coordinate Zn(2+). The core stretch occupies residues 38-48 (FQTKGLGISYG). The tract at residues 47–101 (YGRKKRRQRRSAPPSSEDHQNPIPKQPLPQTRGDQTGSEESKKKVESKTETDPFD) is disordered. Residues 49–57 (RKKRRQRRS) carry the Nuclear localization signal, RNA-binding (TAR), and protein transduction motif. The segment at 49–86 (RKKRRQRRSAPPSSEDHQNPIPKQPLPQTRGDQTGSEE) is interaction with the host capping enzyme RNGTT. 2 positions are modified to N6-acetyllysine; by host EP300 and GCN5L2: Lys-50 and Lys-51. Asymmetric dimethylarginine; by host PRMT6 occurs at positions 52 and 53. A Glycyl lysine isopeptide (Lys-Gly) (interchain with G-Cter in ubiquitin) cross-link involves residue Lys-71. The Cell attachment site motif lies at 78-80 (RGD). A compositionally biased stretch (basic and acidic residues) spans 85 to 101 (EESKKKVESKTETDPFD).

It belongs to the lentiviruses Tat family. Interacts with host CCNT1. Associates with the P-TEFb complex composed at least of Tat, P-TEFb (CDK9 and CCNT1), TAR RNA, RNA Pol II. Recruits the HATs CREBBP, TAF1/TFIID, EP300, PCAF and GCN5L2. Interacts with host KAT5/Tip60; this interaction targets the latter to degradation. Interacts with the host deacetylase SIRT1. Interacts with host capping enzyme RNGTT; this interaction stimulates RNGTT. Binds to host KDR, and to the host integrins ITGAV/ITGB3 and ITGA5/ITGB1. Interacts with host KPNB1/importin beta-1 without previous binding to KPNA1/importin alpha-1. Interacts with EIF2AK2. Interacts with host nucleosome assembly protein NAP1L1; this interaction may be required for the transport of Tat within the nucleus, since the two proteins interact at the nuclear rim. Interacts with host C1QBP/SF2P32; this interaction involves lysine-acetylated Tat. Interacts with the host chemokine receptors CCR2, CCR3 and CXCR4. Interacts with host DPP4/CD26; this interaction may trigger an anti-proliferative effect. Interacts with host LDLR. Interacts with the host extracellular matrix metalloproteinase MMP1. Interacts with host PRMT6; this interaction mediates Tat's methylation. Interacts with, and is ubiquitinated by MDM2/Hdm2. Interacts with host PSMC3 and HTATIP2. Interacts with STAB1; this interaction may overcome SATB1-mediated repression of IL2 and IL2RA (interleukin) in T cells by binding to the same domain than HDAC1. Interacts (when acetylated) with human CDK13, thereby increasing HIV-1 mRNA splicing and promoting the production of the doubly spliced HIV-1 protein Nef. Interacts with host TBP; this interaction modulates the activity of transcriptional pre-initiation complex. Interacts with host RELA. Interacts with host PLSCR1; this interaction negatively regulates Tat transactivation activity by altering its subcellular distribution. Post-translationally, asymmetrical arginine methylation by host PRMT6 seems to diminish the transactivation capacity of Tat and affects the interaction with host CCNT1. Acetylation by EP300, CREBBP, GCN5L2/GCN5 and PCAF regulates the transactivation activity of Tat. EP300-mediated acetylation of Lys-50 promotes dissociation of Tat from the TAR RNA through the competitive binding to PCAF's bromodomain. In addition, the non-acetylated Tat's N-terminus can also interact with PCAF. PCAF-mediated acetylation of Lys-28 enhances Tat's binding to CCNT1. Lys-50 is deacetylated by SIRT1. In terms of processing, polyubiquitination by host MDM2 does not target Tat to degradation, but activates its transactivation function and fosters interaction with CCNT1 and TAR RNA. Post-translationally, phosphorylated by EIF2AK2 on serine and threonine residues adjacent to the basic region important for TAR RNA binding and function. Phosphorylation of Tat by EIF2AK2 is dependent on the prior activation of EIF2AK2 by dsRNA.

Its subcellular location is the host nucleus. It localises to the host nucleolus. It is found in the host cytoplasm. The protein localises to the secreted. Functionally, transcriptional activator that increases RNA Pol II processivity, thereby increasing the level of full-length viral transcripts. Recognizes a hairpin structure at the 5'-LTR of the nascent viral mRNAs referred to as the transactivation responsive RNA element (TAR) and recruits the cyclin T1-CDK9 complex (P-TEFb complex) that will in turn hyperphosphorylate the RNA polymerase II to allow efficient elongation. The CDK9 component of P-TEFb and other Tat-activated kinases hyperphosphorylate the C-terminus of RNA Pol II that becomes stabilized and much more processive. Other factors such as HTATSF1/Tat-SF1, SUPT5H/SPT5, and HTATIP2 are also important for Tat's function. Besides its effect on RNA Pol II processivity, Tat induces chromatin remodeling of proviral genes by recruiting the histone acetyltransferases (HATs) CREBBP, EP300 and PCAF to the chromatin. This also contributes to the increase in proviral transcription rate, especially when the provirus integrates in transcriptionally silent region of the host genome. To ensure maximal activation of the LTR, Tat mediates nuclear translocation of NF-kappa-B by interacting with host RELA. Through its interaction with host TBP, Tat may also modulate transcription initiation. Tat can reactivate a latently infected cell by penetrating in it and transactivating its LTR promoter. In the cytoplasm, Tat is thought to act as a translational activator of HIV-1 mRNAs. Extracellular circulating Tat can be endocytosed by surrounding uninfected cells via the binding to several surface receptors such as CD26, CXCR4, heparan sulfate proteoglycans (HSPG) or LDLR. Neurons are rarely infected, but they internalize Tat via their LDLR. Through its interaction with nuclear HATs, Tat is potentially able to control the acetylation-dependent cellular gene expression. Modulates the expression of many cellular genes involved in cell survival, proliferation or in coding for cytokines or cytokine receptors. Tat plays a role in T-cell and neurons apoptosis. Tat induced neurotoxicity and apoptosis probably contribute to neuroAIDS. Circulating Tat also acts as a chemokine-like and/or growth factor-like molecule that binds to specific receptors on the surface of the cells, affecting many cellular pathways. In the vascular system, Tat binds to ITGAV/ITGB3 and ITGA5/ITGB1 integrins dimers at the surface of endothelial cells and competes with bFGF for heparin-binding sites, leading to an excess of soluble bFGF. This is Protein Tat from Human immunodeficiency virus type 1 group M subtype C (isolate 92BR025) (HIV-1).